A 264-amino-acid polypeptide reads, in one-letter code: Ribosome-recycling factor, mitochondrial (264 aa).

The protein belongs to the RRF family.

Its subcellular location is the mitochondrion. Its function is as follows. Necessary for protein synthesis in mitochondria. Functions as a ribosome recycling factor in mitochondria. The protein is Ribosome-recycling factor, mitochondrial (RRF1) of Yarrowia lipolytica (strain CLIB 122 / E 150) (Yeast).